Consider the following 444-residue polypeptide: Crh-like protein 3 (444 aa).

Residues 1–19 (MVGKSTLLSVLASASVAFA) form the signal peptide. A disulfide bridge connects residues Cys27 and Cys34. Residues 57–271 (SLESCVPEPV…WAGGEIDWNS (215 aa)) form the GH16 domain. The active-site Nucleophile is the Glu157. Glu161 functions as the Proton donor in the catalytic mechanism. Glu161 lines the chitin pocket. N-linked (GlcNAc...) asparagine glycans are attached at residues Asn187 and Asn228. Chitin contacts are provided by Trp248 and Thr259. Asn315, Asn323, Asn336, and Asn371 each carry an N-linked (GlcNAc...) asparagine glycan. Ser415 is lipidated: GPI-anchor amidated serine. A propeptide spans 416 to 444 (ADSLVANQERVLKGSLFAGIVAVVAMMAL) (removed in mature form).

It belongs to the glycosyl hydrolase 16 family. CRH1 subfamily. Forms homodimers as well as heterodimers with other crh protein members crh1 and crh2. Dimerization may be necessary for the transglycosylation activity.

It localises to the cell membrane. The enzyme catalyses Random endo-hydrolysis of N-acetyl-beta-D-glucosaminide (1-&gt;4)-beta-linkages in chitin and chitodextrins.. Functionally, dual chitinase/transglycosylase that plays a role in cell wall architecture. Chitinase and transglycosylase activities are coupled. Required for the polysaccharide cross-linking at the septa and the cell wall. More specifically, transfers chitin to 1,6-beta-glucan in the cell wall. The protein is Crh-like protein 3 of Botryotinia fuckeliana (strain B05.10) (Noble rot fungus).